Consider the following 208-residue polypeptide: Protein-L-isoaspartate O-methyltransferase (208 aa).

Residue Ser-59 is part of the active site.

The protein belongs to the methyltransferase superfamily. L-isoaspartyl/D-aspartyl protein methyltransferase family.

The protein localises to the cytoplasm. The catalysed reaction is [protein]-L-isoaspartate + S-adenosyl-L-methionine = [protein]-L-isoaspartate alpha-methyl ester + S-adenosyl-L-homocysteine. Catalyzes the methyl esterification of L-isoaspartyl residues in peptides and proteins that result from spontaneous decomposition of normal L-aspartyl and L-asparaginyl residues. It plays a role in the repair and/or degradation of damaged proteins. The polypeptide is Protein-L-isoaspartate O-methyltransferase (Klebsiella pneumoniae subsp. pneumoniae (strain ATCC 700721 / MGH 78578)).